The primary structure comprises 84 residues: Cytochrome c oxidase subunit 12, mitochondrial (84 aa).

Positions 27–70 (TKHCWQNYVDYHKCILAKGEDFAPCRQFWLAYRSLCPSGWYQRW) constitute a CHCH domain. Positions 30–40 (CWQNYVDYHKC) match the Cx9C motif motif. Cystine bridges form between cysteine 30–cysteine 62 and cysteine 40–cysteine 51. The short motif at 51-62 (CRQFWLAYRSLC) is the Cx10C motif element.

It belongs to the cytochrome c oxidase subunit 6B family. Component of the cytochrome c oxidase (complex IV, CIV), a multisubunit enzyme composed of 11 subunits. The complex is composed of a catalytic core of 3 subunits Cox1, Cox2 and Cox3, encoded in the mitochondrial DNA, and 8 supernumerary subunits Cox4, Cox5a/Cox5, Cox6, Cox7, Cox8, Cox7a/Cox9, Cox6b/Cox12 and Cox6a/Cox13, which are encoded in the nuclear genome. The complex exists as a monomer or a dimer and forms respiratory supercomplexes (SCs) in the inner mitochondrial membrane with NADH-ubiquinone oxidoreductase (complex I, CI) and ubiquinol-cytochrome c oxidoreductase (cytochrome b-c1 complex, complex III, CIII), resulting in various different assemblies (supercomplexes I(1)IV(1), I(1)III(3)IV(2), III(2)IV(1) and III(2)IV(2) as well as larger supercomplexes of compositions like I(1)III(2)IV(5-6)).

Its subcellular location is the mitochondrion inner membrane. It participates in energy metabolism; oxidative phosphorylation. Its function is as follows. Component of the cytochrome c oxidase, the last enzyme in the mitochondrial electron transport chain which drives oxidative phosphorylation. The respiratory chain contains 3 multisubunit complexes succinate dehydrogenase (complex II, CII), ubiquinol-cytochrome c oxidoreductase (cytochrome b-c1 complex, complex III, CIII) and cytochrome c oxidase (complex IV, CIV), that cooperate to transfer electrons derived from NADH and succinate to molecular oxygen, creating an electrochemical gradient over the inner membrane that drives transmembrane transport and the ATP synthase. Cytochrome c oxidase is the component of the respiratory chain that catalyzes the reduction of oxygen to water. Electrons originating from reduced cytochrome c in the intermembrane space (IMS) are transferred via the dinuclear copper A center (CU(A)) of Cox2 and heme A of Cox1 to the active site in Cox1, a binuclear center (BNC) formed by heme A3 and copper B (CU(B)). The BNC reduces molecular oxygen to 2 water molecules using 4 electrons from cytochrome c in the IMS and 4 protons from the mitochondrial matrix. The polypeptide is Cytochrome c oxidase subunit 12, mitochondrial (cox-13) (Neurospora crassa (strain ATCC 24698 / 74-OR23-1A / CBS 708.71 / DSM 1257 / FGSC 987)).